The following is a 439-amino-acid chain: Lactamase-like protein nscB (439 aa).

The Zn(2+) site is built by histidine 214, histidine 216, aspartate 218, and histidine 219. Residue aspartate 218 is the Proton donor/acceptor of the active site.

The protein belongs to the metallo-beta-lactamase superfamily. It depends on Zn(2+) as a cofactor.

It participates in secondary metabolite biosynthesis. Functionally, lactamase-like protein; part of the gene cluster that mediates the biosynthesis of neosartoricin B, a prenylated anthracenone that probably exhibits T-cell antiproliferative activity, suggestive of a physiological role as an immunosuppressive agent. The non-reducing polyketide synthase nscA probably synthesizes and cyclizes the decaketide backbone. The hydrolase nscB then mediates the product release through hydrolysis followed by spontaneous decarboxylation. The prenyltransferase nscD catalyzes the addition of the dimethylallyl group to the aromatic C5. The FAD-dependent monooxygenase nscC is then responsible for the stereospecific hydroxylation at C2. Neosartoricin B can be converted into two additional compounds neosartoricins C and D. Neosartoricin C is a spirocyclic compound that is cyclized through the attack of C3 hydroxyl on C14, followed by dehydration. On the other hand, neosartoricin D is a further cyclized compound in which attack of C2 on C14 in neosartoricin C results in the formation of the acetal-containing dioxabicyclo-octanone ring. Both of these compounds are novel and possibly represent related metabolites of the gene cluster. This Arthroderma benhamiae (strain ATCC MYA-4681 / CBS 112371) (Trichophyton mentagrophytes) protein is Lactamase-like protein nscB.